A 141-amino-acid chain; its full sequence is Vesicle-associated membrane protein 4 (141 aa).

The segment at 1-51 is disordered; the sequence is MPPKFKRHLNDDDVTGSVKSERRNLLEDDSDEEEDFFLRGPSGPRFGPRND. At 1–115 the chain is on the cytoplasmic side; that stretch reads MPPKFKRHLN…RRQMWWRGCK (115 aa). Phosphoserine occurs at positions 17 and 30. Residues 52 to 112 enclose the v-SNARE coiled-coil homology domain; the sequence is KIKHVQNQVD…KQLRRQMWWR (61 aa). A helical; Anchor for type IV membrane protein transmembrane segment spans residues 116–136; it reads IKAIMALVAAILLLVIIILIV. The Vesicular segment spans residues 137–141; it reads MKYRT.

It belongs to the synaptobrevin family. Identified in a complex containing STX6, STX12, VAMP4 and VTI1A. Interacts with BAIAP3; this interaction is increased in the presence of calcium.

The protein resides in the golgi apparatus. It localises to the trans-Golgi network membrane. Involved in the pathway that functions to remove an inhibitor (probably synaptotagmin-4) of calcium-triggered exocytosis during the maturation of secretory granules. May be a marker for this sorting pathway that is critical for remodeling the secretory response of granule. In Homo sapiens (Human), this protein is Vesicle-associated membrane protein 4 (VAMP4).